A 718-amino-acid chain; its full sequence is Neutral ceramidase B (718 aa).

The signal sequence occupies residues 1–20 (MINSFKKLIILISLVIILLS). N-linked (GlcNAc...) asparagine glycosylation is found at N224 and N252. The Nucleophile role is filled by S298. N-linked (GlcNAc...) asparagine glycans are attached at residues N358, N378, N391, N421, N422, N577, N610, and N614.

This sequence belongs to the neutral ceramidase family.

It is found in the secreted. The enzyme catalyses an N-acylsphing-4-enine + H2O = sphing-4-enine + a fatty acid. Its function is as follows. Hydrolyzes the sphingolipid ceramide into sphingosine and free fatty acid. The chain is Neutral ceramidase B (dcd2B) from Dictyostelium discoideum (Social amoeba).